The chain runs to 97 residues: YcgL domain-containing protein Psyr_1564 (97 aa).

One can recognise a YcgL domain in the interval 3-87 (RICSIYRSPK…AEDDYIEHLP (85 aa)).

In Pseudomonas syringae pv. syringae (strain B728a), this protein is YcgL domain-containing protein Psyr_1564.